A 175-amino-acid chain; its full sequence is NADH-quinone oxidoreductase subunit B (175 aa).

Residues cysteine 54, cysteine 55, cysteine 119, and cysteine 149 each coordinate [4Fe-4S] cluster.

The protein belongs to the complex I 20 kDa subunit family. In terms of assembly, NDH-1 is composed of at least 14 different subunits, Nqo1 to Nqo14. The complex has a L-shaped structure, with the hydrophobic arm (subunits Nqo7, Nqo8, Nqo10 to Nqo14) embedded in the inner membrane and the hydrophilic peripheral arm (subunits Nqo1 to Nqo6, Nqo9) protruding into the bacterial cytoplasm. The hydrophilic domain contains all the redox centers. NADH-quinone oxidoreductase forms a supercomplex with ubiquinol-cytochrome c reductase complex (complex III or cytochrome b-c1 complex) and cytochrome c oxidase (complex IV), which stabilizes the NADH-quinone oxidoreductase complex. The cofactor is [4Fe-4S] cluster.

The protein resides in the cell inner membrane. The enzyme catalyses a quinone + NADH + 5 H(+)(in) = a quinol + NAD(+) + 4 H(+)(out). NDH-1 shuttles electrons from NADH, via FMN and iron-sulfur (Fe-S) centers, to quinones in the respiratory chain. The immediate electron acceptor for the enzyme in this species is believed to be ubiquinone. Couples the redox reaction to proton translocation (for every two electrons transferred, four hydrogen ions are translocated across the cytoplasmic membrane), and thus conserves the redox energy in a proton gradient. In Paracoccus denitrificans (strain Pd 1222), this protein is NADH-quinone oxidoreductase subunit B.